Consider the following 537-residue polypeptide: Hexahomomethionine N-hydroxylase (537 aa).

A helical transmembrane segment spans residues 7–27 (FNTCFQILLGFIVFIASITLL).

This sequence belongs to the cytochrome P450 family. It depends on heme as a cofactor. Highly expressed in hypocotyl and roots. Lower expression in siliques, stems and leaves. Barely detectable in flowers. Expressed only in the vascular bundles in apical plant parts.

The protein resides in the endoplasmic reticulum membrane. It catalyses the reaction L-hexahomomethionine + 2 reduced [NADPH--hemoprotein reductase] + 2 O2 = (E)-9-(methylsulfanyl)nonanal oxime + 2 oxidized [NADPH--hemoprotein reductase] + CO2 + 3 H2O + 2 H(+). The enzyme catalyses L-pentahomomethionine + 2 reduced [NADPH--hemoprotein reductase] + 2 O2 = (E)-8-(methylsulfanyl)octanal oxime + 2 oxidized [NADPH--hemoprotein reductase] + CO2 + 3 H2O + 2 H(+). The catalysed reaction is an L-polyhomomethionine + 2 reduced [NADPH--hemoprotein reductase] + 2 O2 = an (E)-omega-(methylsulfanyl)-alkanal oxime + 2 oxidized [NADPH--hemoprotein reductase] + CO2 + 3 H2O + 2 H(+). Its function is as follows. Catalyzes the conversion of the long chain elongated methionines penta- and hexahomomethionine to their corresponding aldoximes 8-methylthiooctanaldoxime and 9-methylthiononanaldoxime. This chain is Hexahomomethionine N-hydroxylase (CYP79F2), found in Arabidopsis thaliana (Mouse-ear cress).